Here is a 753-residue protein sequence, read N- to C-terminus: 5-methyltetrahydropteroyltriglutamate--homocysteine methyltransferase (753 aa).

Residues 17-20 (RELK) and K117 contribute to the 5-methyltetrahydropteroyltri-L-glutamate site. L-homocysteine is bound by residues 431-433 (IGS) and E484. L-methionine is bound by residues 431–433 (IGS) and E484. 5-methyltetrahydropteroyltri-L-glutamate is bound by residues 515-516 (RC) and W561. D599 contacts L-homocysteine. Residue D599 coordinates L-methionine. E605 contributes to the 5-methyltetrahydropteroyltri-L-glutamate binding site. Zn(2+) contacts are provided by H641, C643, and E665. The active-site Proton donor is the H694. A Zn(2+)-binding site is contributed by C726.

This sequence belongs to the vitamin-B12 independent methionine synthase family. The cofactor is Zn(2+).

It carries out the reaction 5-methyltetrahydropteroyltri-L-glutamate + L-homocysteine = tetrahydropteroyltri-L-glutamate + L-methionine. The protein operates within amino-acid biosynthesis; L-methionine biosynthesis via de novo pathway; L-methionine from L-homocysteine (MetE route): step 1/1. In terms of biological role, catalyzes the transfer of a methyl group from 5-methyltetrahydrofolate to homocysteine resulting in methionine formation. The polypeptide is 5-methyltetrahydropteroyltriglutamate--homocysteine methyltransferase (Shigella boydii serotype 18 (strain CDC 3083-94 / BS512)).